The following is a 314-amino-acid chain: DNA-directed RNA polymerase subunit alpha (314 aa).

The alpha N-terminal domain (alpha-NTD) stretch occupies residues Met1–Thr228. The tract at residues Lys245–Asp314 is alpha C-terminal domain (alpha-CTD).

It belongs to the RNA polymerase alpha chain family. In terms of assembly, homodimer. The RNAP catalytic core consists of 2 alpha, 1 beta, 1 beta' and 1 omega subunit. When a sigma factor is associated with the core the holoenzyme is formed, which can initiate transcription.

The catalysed reaction is RNA(n) + a ribonucleoside 5'-triphosphate = RNA(n+1) + diphosphate. Functionally, DNA-dependent RNA polymerase catalyzes the transcription of DNA into RNA using the four ribonucleoside triphosphates as substrates. The chain is DNA-directed RNA polymerase subunit alpha from Staphylococcus aureus (strain bovine RF122 / ET3-1).